Reading from the N-terminus, the 141-residue chain is Protein archease (141 aa).

Positions 19 and 140 each coordinate Ca(2+).

Belongs to the archease family.

Functionally, activates the tRNA-splicing ligase complex by facilitating the enzymatic turnover of catalytic subunit RtcB. Acts by promoting the guanylylation of RtcB, a key intermediate step in tRNA ligation. Can also alter the NTP specificity of RtcB such that ATP, dGTP or ITP is used efficiently. The chain is Protein archease from Thermoplasma acidophilum (strain ATCC 25905 / DSM 1728 / JCM 9062 / NBRC 15155 / AMRC-C165).